The sequence spans 162 residues: Nucleotide-binding protein SGR_2909 (162 aa).

This sequence belongs to the YajQ family.

Nucleotide-binding protein. This chain is Nucleotide-binding protein SGR_2909, found in Streptomyces griseus subsp. griseus (strain JCM 4626 / CBS 651.72 / NBRC 13350 / KCC S-0626 / ISP 5235).